A 273-amino-acid chain; its full sequence is Small ribosomal subunit protein eS1 (273 aa).

It belongs to the eukaryotic ribosomal protein eS1 family. Component of the small ribosomal subunit. Mature ribosomes consist of a small (40S) and a large (60S) subunit. The 40S subunit contains about 33 different proteins and 1 molecule of RNA (18S). The 60S subunit contains about 49 different proteins and 3 molecules of RNA (25S, 5.8S and 5S).

Its subcellular location is the cytoplasm. The polypeptide is Small ribosomal subunit protein eS1 (rps3a) (Dictyostelium discoideum (Social amoeba)).